Consider the following 169-residue polypeptide: Ribosome maturation factor RimM (169 aa).

The PRC barrel domain occupies 97–169 (EDEVYFKDLI…KIVVDWEYDY (73 aa)).

This sequence belongs to the RimM family. Binds ribosomal protein uS19.

Its subcellular location is the cytoplasm. Its function is as follows. An accessory protein needed during the final step in the assembly of 30S ribosomal subunit, possibly for assembly of the head region. Essential for efficient processing of 16S rRNA. May be needed both before and after RbfA during the maturation of 16S rRNA. It has affinity for free ribosomal 30S subunits but not for 70S ribosomes. This is Ribosome maturation factor RimM from Francisella tularensis subsp. tularensis (strain WY96-3418).